A 289-amino-acid chain; its full sequence is Phosphatidylserine decarboxylase proenzyme (289 aa).

Residues Asp-92, His-149, and Ser-254 each act as charge relay system; for autoendoproteolytic cleavage activity in the active site. Ser-254 acts as the Schiff-base intermediate with substrate; via pyruvic acid; for decarboxylase activity in catalysis. At Ser-254 the chain carries Pyruvic acid (Ser); by autocatalysis.

Belongs to the phosphatidylserine decarboxylase family. PSD-B subfamily. Prokaryotic type I sub-subfamily. Heterodimer of a large membrane-associated beta subunit and a small pyruvoyl-containing alpha subunit. Pyruvate is required as a cofactor. Is synthesized initially as an inactive proenzyme. Formation of the active enzyme involves a self-maturation process in which the active site pyruvoyl group is generated from an internal serine residue via an autocatalytic post-translational modification. Two non-identical subunits are generated from the proenzyme in this reaction, and the pyruvate is formed at the N-terminus of the alpha chain, which is derived from the carboxyl end of the proenzyme. The autoendoproteolytic cleavage occurs by a canonical serine protease mechanism, in which the side chain hydroxyl group of the serine supplies its oxygen atom to form the C-terminus of the beta chain, while the remainder of the serine residue undergoes an oxidative deamination to produce ammonia and the pyruvoyl prosthetic group on the alpha chain. During this reaction, the Ser that is part of the protease active site of the proenzyme becomes the pyruvoyl prosthetic group, which constitutes an essential element of the active site of the mature decarboxylase.

Its subcellular location is the cell membrane. It catalyses the reaction a 1,2-diacyl-sn-glycero-3-phospho-L-serine + H(+) = a 1,2-diacyl-sn-glycero-3-phosphoethanolamine + CO2. The protein operates within phospholipid metabolism; phosphatidylethanolamine biosynthesis; phosphatidylethanolamine from CDP-diacylglycerol: step 2/2. Catalyzes the formation of phosphatidylethanolamine (PtdEtn) from phosphatidylserine (PtdSer). This is Phosphatidylserine decarboxylase proenzyme from Pseudomonas aeruginosa (strain UCBPP-PA14).